Reading from the N-terminus, the 541-residue chain is 5' exonuclease Apollo (541 aa).

Lys-334 is covalently cross-linked (Glycyl lysine isopeptide (Lys-Gly) (interchain with G-Cter in SUMO2)). 2 disordered regions span residues 350–375 and 450–489; these read TQGV…KKHK and IGLG…TTHL. Over residues 358–371 the composition is skewed to basic and acidic residues; the sequence is PEEKADQVKVDRDS. The TBM motif lies at 492 to 507; the sequence is ESGGLALKYLLTPVDF.

It belongs to the DNA repair metallo-beta-lactamase (DRMBL) family. As to quaternary structure, interacts with TERF2; the interaction is direct. Interacts with MUS81, MRE11 and FANCD2. Interacts with HSPA2, HSPA8 and HSPA14. Interacts with SPAG5. Ubiquitinated, leading to its degradation. Interaction with TERF2 protects it from ubiquitination.

The protein resides in the chromosome. It localises to the telomere. Its subcellular location is the nucleus. The protein localises to the cytoplasm. It is found in the cytoskeleton. The protein resides in the microtubule organizing center. It localises to the centrosome. The catalysed reaction is a beta-lactam + H2O = a substituted beta-amino acid. In terms of biological role, 5'-3' exonuclease that plays a central role in telomere maintenance and protection during S-phase. Participates in the protection of telomeres against non-homologous end-joining (NHEJ)-mediated repair, thereby ensuring that telomeres do not fuse. Plays a key role in telomeric loop (T loop) formation by being recruited by TERF2 at the leading end telomeres and by processing leading-end telomeres immediately after their replication via its exonuclease activity: generates 3' single-stranded overhang at the leading end telomeres avoiding blunt leading-end telomeres that are vulnerable to end-joining reactions and expose the telomere end in a manner that activates the DNA repair pathways. Together with TERF2, required to protect telomeres from replicative damage during replication by controlling the amount of DNA topoisomerase (TOP1, TOP2A and TOP2B) needed for telomere replication during fork passage and prevent aberrant telomere topology. Also involved in response to DNA damage: plays a role in response to DNA interstrand cross-links (ICLs) by facilitating double-strand break formation. In case of spindle stress, involved in prophase checkpoint. Possesses beta-lactamase activity, catalyzing the hydrolysis of penicillin G and nitrocefin. Exhibits no activity towards other beta-lactam antibiotic classes including cephalosporins (cefotaxime) and carbapenems (imipenem). This is 5' exonuclease Apollo (Dclre1b) from Rattus norvegicus (Rat).